The chain runs to 318 residues: DNA repair nuclease/redox regulator APEX1 (318 aa).

The tract at residues 1 to 33 (MPKRGKKGAVAEDGDELKTEPEAKKSKTAAKKN) is necessary for interaction with YBX1, binding to RNA, association together with NPM1 to rRNA, endoribonuclease activity on abasic RNA and localization in the nucleoli. The interval 1–60 (MPKRGKKGAVAEDGDELKTEPEAKKSKTAAKKNDKEAAGEGPALYEDPPDQKTSPSGKPA) is disordered. N6-acetyllysine; by EP300 is present on residues lysine 6 and lysine 7. Residues 8–13 (GAVAED) carry the Nuclear localization signal (NLS) motif. A compositionally biased stretch (basic and acidic residues) spans 16–38 (ELKTEPEAKKSKTAAKKNDKEAA). The interval 23–33 (AKKSKTAAKKN) is necessary for interaction with NPM1 and for efficient rRNA binding. Residues lysine 27, lysine 31, lysine 32, and lysine 35 each carry the N6-acetyllysine modification. Serine 54 carries the post-translational modification Phosphoserine. The short motif at 64-80 (ICSWNVDGLRAWIKKKG) is the Nuclear export signal (NES) element. The residue at position 65 (cysteine 65) is an S-nitrosocysteine; alternate. A disulfide bridge connects residues cysteine 65 and cysteine 93. Residue aspartate 70 participates in Mg(2+) binding. At cysteine 93 the chain carries S-nitrosocysteine; alternate. A Mg(2+)-binding site is contributed by glutamate 96. Residue tyrosine 171 is part of the active site. An N6-acetyllysine modification is found at lysine 197. Aspartate 210 and asparagine 212 together coordinate Mg(2+). The active-site Proton donor/acceptor is the aspartate 210. Threonine 233 bears the Phosphothreonine; by CDK5 mark. The tract at residues 289 to 318 (HSLLPALCDSKIRSKALGSDHCPITLYLAL) is mitochondrial targeting sequence (MTS). Aspartate 308 lines the Mg(2+) pocket. Cysteine 310 carries the S-nitrosocysteine modification.

It belongs to the DNA repair enzymes AP/ExoA family. In terms of assembly, monomer. Homodimer; disulfide-linked. Component of the SET complex, composed of at least APEX1, SET, ANP32A, HMGB2, NME1 and TREX1. Associates with the dimer XRCC5/XRCC6 in a DNA-dependent manner. Interacts with SIRT1; the interaction is increased in the context of genotoxic stress. Interacts with HDAC1, HDAC2 and HDAC3; the interactions are not dependent on the APEX1 acetylation status. Interacts with XRCC1; the interaction is induced by SIRT1 and increased with the APEX1 acetylated form. Interacts with NPM1 (via N-terminal domain); the interaction is RNA-dependent and decreases in hydrogen peroxide-damaged cells. Interacts (via N-terminus) with YBX1 (via C-terminus); the interaction is increased in presence of APEX1 acetylated at Lys-6 and Lys-7. Interacts with HNRNPL; the interaction is DNA-dependent. Interacts (via N-terminus) with KPNA1 and KPNA2. Interacts with TXN; the interaction stimulates the FOS/JUN AP-1 complex DNA-binding activity in a redox-dependent manner. Interacts with GZMA, KRT8, MDM2, POLB, PRDX6, PRPF19, RPLP0, TOMM20 and WDR77. Binds to CDK5. Mg(2+) serves as cofactor. Mn(2+) is required as a cofactor. Phosphorylated. Phosphorylation by kinase PKC or casein kinase CK2 results in enhanced redox activity that stimulates binding of the FOS/JUN AP-1 complex to its cognate binding site. AP-endodeoxyribonuclease activity is not affected by CK2-mediated phosphorylation. Phosphorylation of Thr-233 by CDK5 in response to MPP(+)/MPTP (1-methyl-4-phenylpyridinium) reduces AP-endodeoxyribonuclease activity resulting in accumulation of DNA damage and contributing to neuronal death. In terms of processing, acetylated on Lys-6 and Lys-7. Acetylation is increased by the transcriptional coactivator EP300 acetyltransferase, genotoxic agents like H(2)O(2) and methyl methanesulfonate (MMS). Acetylation increases its binding affinity to the negative calcium response element (nCaRE) DNA promoter. The acetylated form induces a stronger binding of YBX1 to the Y-box sequence in the MDR1 promoter than the unacetylated form. Deacetylated on lysines. Lys-6 and Lys-7 are deacetylated by SIRT1. Post-translationally, cleaved at Lys-31 by granzyme A to create the mitochondrial form; leading in reduction of binding to DNA, AP endodeoxyribonuclease activity, redox activation of transcription factors and to enhanced cell death. Cleaved by granzyme K; leading to intracellular ROS accumulation and enhanced cell death after oxidative stress. Cys-69 and Cys-93 are nitrosylated in response to nitric oxide (NO) and lead to the exposure of the nuclear export signal (NES). In terms of processing, ubiquitinated by MDM2; leading to translocation to the cytoplasm and proteasomal degradation.

Its subcellular location is the nucleus. It localises to the nucleolus. The protein localises to the nucleus speckle. The protein resides in the endoplasmic reticulum. It is found in the cytoplasm. Its subcellular location is the mitochondrion. The catalysed reaction is Exonucleolytic cleavage in the 3'- to 5'-direction to yield nucleoside 5'-phosphates.. With respect to regulation, NPM1 stimulates endodeoxyribonuclease activity on double-stranded DNA with AP sites, but inhibits endoribonuclease activity on single-stranded RNA containing AP sites. In terms of biological role, multifunctional protein that plays a central role in the cellular response to oxidative stress. The two major activities of APEX1 are DNA repair and redox regulation of transcriptional factors. Functions as an apurinic/apyrimidinic (AP) endodeoxyribonuclease in the DNA base excision repair (BER) pathway of DNA lesions induced by oxidative and alkylating agents. Initiates repair of AP sites in DNA by catalyzing hydrolytic incision of the phosphodiester backbone immediately adjacent to the damage, generating a single-strand break with 5'-deoxyribose phosphate and 3'-hydroxyl ends. Also incises at AP sites in the DNA strand of DNA/RNA hybrids, single-stranded DNA regions of R-loop structures, and single-stranded RNA molecules. Has 3'-5' exoribonuclease activity on mismatched deoxyribonucleotides at the 3' termini of nicked or gapped DNA molecules during short-patch BER. Possesses DNA 3' phosphodiesterase activity capable of removing lesions (such as phosphoglycolate) blocking the 3' side of DNA strand breaks. May also play a role in the epigenetic regulation of gene expression by participating in DNA demethylation. Acts as a loading factor for POLB onto non-incised AP sites in DNA and stimulates the 5'-terminal deoxyribose 5'-phosphate (dRp) excision activity of POLB. Plays a role in the protection from granzyme-mediated cellular repair leading to cell death. Also involved in the DNA cleavage step of class switch recombination (CSR). On the other hand, APEX1 also exerts reversible nuclear redox activity to regulate DNA binding affinity and transcriptional activity of transcriptional factors by controlling the redox status of their DNA-binding domain, such as the FOS/JUN AP-1 complex after exposure to IR. Involved in calcium-dependent down-regulation of parathyroid hormone (PTH) expression by binding to negative calcium response elements (nCaREs). Together with HNRNPL or the dimer XRCC5/XRCC6, associates with nCaRE, acting as an activator of transcriptional repression. Stimulates the YBX1-mediated MDR1 promoter activity, when acetylated at Lys-6 and Lys-7, leading to drug resistance. Also acts as an endoribonuclease involved in the control of single-stranded RNA metabolism. Plays a role in regulating MYC mRNA turnover by preferentially cleaving in between UA and CA dinucleotides of the MYC coding region determinant (CRD). In association with NMD1, plays a role in the rRNA quality control process during cell cycle progression. Associates, together with YBX1, on the MDR1 promoter. Together with NPM1, associates with rRNA. Binds DNA and RNA. This chain is DNA repair nuclease/redox regulator APEX1 (APEX1), found in Gorilla gorilla gorilla (Western lowland gorilla).